Here is a 460-residue protein sequence, read N- to C-terminus: Probable Xaa-Pro aminopeptidase VDBG_02538 (460 aa).

4 residues coordinate Mn(2+): Asp256, Asp267, Glu390, and Glu430.

The protein belongs to the peptidase M24B family. The cofactor is Mn(2+).

The enzyme catalyses Release of any N-terminal amino acid, including proline, that is linked to proline, even from a dipeptide or tripeptide.. Its function is as follows. Catalyzes the removal of a penultimate prolyl residue from the N-termini of peptides. The polypeptide is Probable Xaa-Pro aminopeptidase VDBG_02538 (Verticillium alfalfae (strain VaMs.102 / ATCC MYA-4576 / FGSC 10136) (Verticillium wilt of alfalfa)).